A 220-amino-acid chain; its full sequence is Putative glutathione S-transferase C1183.02 (220 aa).

Positions 2–81 (FLGTLYSFKT…YFYEKGKHND (80 aa)) constitute a GST N-terminal domain. A GST C-terminal domain is found at 89–216 (NEVEEAEMLK…FPLELPLTVT (128 aa)).

Belongs to the GST superfamily.

It is found in the cytoplasm. It catalyses the reaction RX + glutathione = an S-substituted glutathione + a halide anion + H(+). Involved in the oxidative stress response and detoxification. The polypeptide is Putative glutathione S-transferase C1183.02 (Schizosaccharomyces pombe (strain 972 / ATCC 24843) (Fission yeast)).